Reading from the N-terminus, the 129-residue chain is V-type proton ATPase subunit F 2 (129 aa).

This sequence belongs to the V-ATPase F subunit family. In terms of assembly, V-ATPase is a heteromultimeric enzyme made up of two complexes: the ATP-hydrolytic V1 complex and the proton translocation V0 complex. The V1 complex consists of three catalytic AB heterodimers that form a heterohexamer, three peripheral stalks each consisting of EG heterodimers, one central rotor including subunits D and F, and the regulatory subunits C and H. The proton translocation complex V0 consists of the proton transport subunit a, a ring of proteolipid subunits c9c'', rotary subunit d, subunits e and f, and the accessory subunits VhaAC45 and ATP6AP2.

Functionally, subunit of the V1 complex of vacuolar(H+)-ATPase (V-ATPase), a multisubunit enzyme composed of a peripheral complex (V1) that hydrolyzes ATP and a membrane integral complex (V0) that translocates protons. V-ATPase is responsible for acidifying and maintaining the pH of intracellular compartments and in some cell types, is targeted to the plasma membrane, where it is responsible for acidifying the extracellular environment. The protein is V-type proton ATPase subunit F 2 (Vha14-2) of Drosophila melanogaster (Fruit fly).